The chain runs to 199 residues: Large ribosomal subunit protein bL9 (199 aa).

The tract at residues 169–199 (TGGFTEEYDPNAEPGEIPTELLEGGEEAAEA) is disordered.

Belongs to the bacterial ribosomal protein bL9 family.

Its function is as follows. Binds to the 23S rRNA. The sequence is that of Large ribosomal subunit protein bL9 from Novosphingobium aromaticivorans (strain ATCC 700278 / DSM 12444 / CCUG 56034 / CIP 105152 / NBRC 16084 / F199).